The primary structure comprises 315 residues: 4-hydroxy-3-methylbut-2-enyl diphosphate reductase (315 aa).

A [4Fe-4S] cluster-binding site is contributed by cysteine 12. (2E)-4-hydroxy-3-methylbut-2-enyl diphosphate is bound by residues histidine 41 and histidine 74. Dimethylallyl diphosphate is bound by residues histidine 41 and histidine 74. Residues histidine 41 and histidine 74 each contribute to the isopentenyl diphosphate site. Cysteine 96 is a [4Fe-4S] cluster binding site. Residue histidine 124 participates in (2E)-4-hydroxy-3-methylbut-2-enyl diphosphate binding. Histidine 124 serves as a coordination point for dimethylallyl diphosphate. Histidine 124 serves as a coordination point for isopentenyl diphosphate. Catalysis depends on glutamate 126, which acts as the Proton donor. Threonine 168 contacts (2E)-4-hydroxy-3-methylbut-2-enyl diphosphate. Residue cysteine 198 participates in [4Fe-4S] cluster binding. Residues serine 226, serine 227, asparagine 228, and serine 270 each contribute to the (2E)-4-hydroxy-3-methylbut-2-enyl diphosphate site. Dimethylallyl diphosphate contacts are provided by serine 226, serine 227, asparagine 228, and serine 270. Residues serine 226, serine 227, asparagine 228, and serine 270 each coordinate isopentenyl diphosphate.

Belongs to the IspH family. The cofactor is [4Fe-4S] cluster.

The catalysed reaction is isopentenyl diphosphate + 2 oxidized [2Fe-2S]-[ferredoxin] + H2O = (2E)-4-hydroxy-3-methylbut-2-enyl diphosphate + 2 reduced [2Fe-2S]-[ferredoxin] + 2 H(+). It carries out the reaction dimethylallyl diphosphate + 2 oxidized [2Fe-2S]-[ferredoxin] + H2O = (2E)-4-hydroxy-3-methylbut-2-enyl diphosphate + 2 reduced [2Fe-2S]-[ferredoxin] + 2 H(+). The protein operates within isoprenoid biosynthesis; dimethylallyl diphosphate biosynthesis; dimethylallyl diphosphate from (2E)-4-hydroxy-3-methylbutenyl diphosphate: step 1/1. Its pathway is isoprenoid biosynthesis; isopentenyl diphosphate biosynthesis via DXP pathway; isopentenyl diphosphate from 1-deoxy-D-xylulose 5-phosphate: step 6/6. Catalyzes the conversion of 1-hydroxy-2-methyl-2-(E)-butenyl 4-diphosphate (HMBPP) into a mixture of isopentenyl diphosphate (IPP) and dimethylallyl diphosphate (DMAPP). Acts in the terminal step of the DOXP/MEP pathway for isoprenoid precursor biosynthesis. This is 4-hydroxy-3-methylbut-2-enyl diphosphate reductase from Pseudomonas putida (strain W619).